The sequence spans 399 residues: Bifunctional enzyme IspD/IspF (399 aa).

The segment at 1–239 is 2-C-methyl-D-erythritol 4-phosphate cytidylyltransferase; the sequence is MHTWALLLAA…SSEKKNMQVP (239 aa). The interval 240–399 is 2-C-methyl-D-erythritol 2,4-cyclodiphosphate synthase; the sequence is CVGWGYDVHR…AVTALRRVSS (160 aa). A divalent metal cation contacts are provided by aspartate 246 and histidine 248. Residues 246–248 and 273–274 each bind 4-CDP-2-C-methyl-D-erythritol 2-phosphate; these read DVH and HS. Histidine 281 serves as a coordination point for a divalent metal cation. 4-CDP-2-C-methyl-D-erythritol 2-phosphate contacts are provided by residues 295–297, 300–304, 371–374, and phenylalanine 378; these read DIG, FPDTD, and TTEE.

It in the N-terminal section; belongs to the IspD/TarI cytidylyltransferase family. IspD subfamily. The protein in the C-terminal section; belongs to the IspF family. A divalent metal cation serves as cofactor.

The catalysed reaction is 2-C-methyl-D-erythritol 4-phosphate + CTP + H(+) = 4-CDP-2-C-methyl-D-erythritol + diphosphate. It catalyses the reaction 4-CDP-2-C-methyl-D-erythritol 2-phosphate = 2-C-methyl-D-erythritol 2,4-cyclic diphosphate + CMP. It functions in the pathway isoprenoid biosynthesis; isopentenyl diphosphate biosynthesis via DXP pathway; isopentenyl diphosphate from 1-deoxy-D-xylulose 5-phosphate: step 2/6. Its pathway is isoprenoid biosynthesis; isopentenyl diphosphate biosynthesis via DXP pathway; isopentenyl diphosphate from 1-deoxy-D-xylulose 5-phosphate: step 4/6. Bifunctional enzyme that catalyzes the formation of 4-diphosphocytidyl-2-C-methyl-D-erythritol from CTP and 2-C-methyl-D-erythritol 4-phosphate (MEP) (IspD), and catalyzes the conversion of 4-diphosphocytidyl-2-C-methyl-D-erythritol 2-phosphate (CDP-ME2P) to 2-C-methyl-D-erythritol 2,4-cyclodiphosphate (ME-CPP) with a corresponding release of cytidine 5-monophosphate (CMP) (IspF). The sequence is that of Bifunctional enzyme IspD/IspF from Oleidesulfovibrio alaskensis (strain ATCC BAA-1058 / DSM 17464 / G20) (Desulfovibrio alaskensis).